The following is a 430-amino-acid chain: Adenylosuccinate synthetase (430 aa).

GTP contacts are provided by residues 12 to 18 (GDEGKGK) and 40 to 42 (GHT). Aspartate 13 serves as the catalytic Proton acceptor. The Mg(2+) site is built by aspartate 13 and glycine 40. IMP-binding positions include 13–16 (DEGK), 38–41 (NAGH), threonine 128, arginine 142, glutamine 223, threonine 238, and arginine 302. Histidine 41 serves as the catalytic Proton donor. Residue 298–304 (TVTKRPR) coordinates substrate. GTP-binding positions include arginine 304, 330 to 332 (CVD), and 412 to 414 (SVG).

It belongs to the adenylosuccinate synthetase family. Homodimer. The cofactor is Mg(2+).

It localises to the cytoplasm. It carries out the reaction IMP + L-aspartate + GTP = N(6)-(1,2-dicarboxyethyl)-AMP + GDP + phosphate + 2 H(+). It participates in purine metabolism; AMP biosynthesis via de novo pathway; AMP from IMP: step 1/2. Its function is as follows. Plays an important role in the de novo pathway of purine nucleotide biosynthesis. Catalyzes the first committed step in the biosynthesis of AMP from IMP. This chain is Adenylosuccinate synthetase, found in Ligilactobacillus salivarius (strain UCC118) (Lactobacillus salivarius).